A 289-amino-acid polypeptide reads, in one-letter code: Probable porphobilinogen deaminase (289 aa).

S-(dipyrrolylmethanemethyl)cysteine is present on cysteine 234.

Belongs to the HMBS family. It depends on dipyrromethane as a cofactor.

It carries out the reaction 4 porphobilinogen + H2O = hydroxymethylbilane + 4 NH4(+). Its pathway is porphyrin-containing compound metabolism; protoporphyrin-IX biosynthesis; coproporphyrinogen-III from 5-aminolevulinate: step 2/4. Its function is as follows. Tetrapolymerization of the monopyrrole PBG into the hydroxymethylbilane pre-uroporphyrinogen in several discrete steps. The sequence is that of Probable porphobilinogen deaminase (hemC) from Archaeoglobus fulgidus (strain ATCC 49558 / DSM 4304 / JCM 9628 / NBRC 100126 / VC-16).